Here is a 202-residue protein sequence, read N- to C-terminus: Urease accessory protein UreE (202 aa).

The interval 138–202 is disordered; that stretch reads RGAYHSHGGH…HGHHHGHKHD (65 aa). Basic and acidic residues predominate over residues 147–193; that stretch reads HSHDHGHAAHDHGHAAHDHGHNHDHDHGHAHGHDHQHDHNCDHDHDH.

The protein belongs to the UreE family.

The protein localises to the cytoplasm. Its function is as follows. Involved in urease metallocenter assembly. Binds nickel. Probably functions as a nickel donor during metallocenter assembly. The chain is Urease accessory protein UreE from Rhizobium etli (strain CIAT 652).